The sequence spans 317 residues: Melanocyte-stimulating hormone receptor (317 aa).

The Extracellular segment spans residues 1 to 37 (MPVLGSQRRLLGSLNCTPPATFPLTLAPNRTGPQCLE). Asn-29 carries an N-linked (GlcNAc...) asparagine glycan. Residues 38–63 (VSIPDGLFLSLGLVSLVENVLVVAAI) traverse the membrane as a helical segment. Topologically, residues 64-72 (AKNRNLHSP) are cytoplasmic. Residues 73–93 (MYYFICCLAVSDLLVSVSNVL) traverse the membrane as a helical segment. Topologically, residues 94–118 (ETAVMLLLEAGALAARAAVVQQLDN) are extracellular. A helical transmembrane segment spans residues 119–140 (VIDMLICGSMVSSLCFLGAIAV). The Cytoplasmic portion of the chain corresponds to 141–163 (DRYISIFYALRYHSVVTLPRAWR). The chain crosses the membrane as a helical span at residues 164 to 183 (IIAAIWVASILTSLLFITYY). Over 184-191 (NHTVVLLC) the chain is Extracellular. A helical transmembrane segment spans residues 192 to 211 (LVGFFIAMLALMAVLYVHML). Residues 212-240 (ARACQHARGIARLQKRQRPIHQGFGLKGA) lie on the Cytoplasmic side of the membrane. A helical membrane pass occupies residues 241–266 (ATLTILLGVFFLCWGPFFLHLSLIVL). Over 267 to 279 (CPQHPTCGCIFKN) the chain is Extracellular. The chain crosses the membrane as a helical span at residues 280-300 (FNLFLALIICNAIVDPLIYAF). The Cytoplasmic segment spans residues 301–317 (RSQELRKTLQEVLQCSW). The S-palmitoyl cysteine moiety is linked to residue Cys-315.

It belongs to the G-protein coupled receptor 1 family. In terms of assembly, interacts with MGRN1, but does not undergo MGRN1-mediated ubiquitination; this interaction competes with GNAS-binding and thus inhibits agonist-induced cAMP production. Interacts with OPN3; the interaction results in a decrease in MC1R-mediated cAMP signaling and ultimately a decrease in melanin production in melanocytes.

Its subcellular location is the cell membrane. Its function is as follows. Receptor for MSH (alpha, beta and gamma) and ACTH. The activity of this receptor is mediated by G proteins which activate adenylate cyclase. Mediates melanogenesis, the production of eumelanin (black/brown) and phaeomelanin (red/yellow), via regulation of cAMP signaling in melanocytes. This Capreolus capreolus (European roe deer) protein is Melanocyte-stimulating hormone receptor (MC1R).